The sequence spans 227 residues: Large ribosomal subunit protein uL3 (227 aa).

It belongs to the universal ribosomal protein uL3 family. As to quaternary structure, part of the 50S ribosomal subunit. Forms a cluster with proteins L14 and L19.

In terms of biological role, one of the primary rRNA binding proteins, it binds directly near the 3'-end of the 23S rRNA, where it nucleates assembly of the 50S subunit. This Persephonella marina (strain DSM 14350 / EX-H1) protein is Large ribosomal subunit protein uL3.